Here is a 234-residue protein sequence, read N- to C-terminus: Octanoyltransferase (234 aa).

Positions 43-231 (IPTRNYFLFV…HFQELFQAEL (189 aa)) constitute a BPL/LPL catalytic domain. Residues 88-95 (RGGDITYH), 160-162 (AMG), and 173-175 (GFA) contribute to the substrate site. Cysteine 191 (acyl-thioester intermediate) is an active-site residue.

This sequence belongs to the LipB family.

It is found in the cytoplasm. The enzyme catalyses octanoyl-[ACP] + L-lysyl-[protein] = N(6)-octanoyl-L-lysyl-[protein] + holo-[ACP] + H(+). The protein operates within protein modification; protein lipoylation via endogenous pathway; protein N(6)-(lipoyl)lysine from octanoyl-[acyl-carrier-protein]: step 1/2. Functionally, catalyzes the transfer of endogenously produced octanoic acid from octanoyl-acyl-carrier-protein onto the lipoyl domains of lipoate-dependent enzymes. Lipoyl-ACP can also act as a substrate although octanoyl-ACP is likely to be the physiological substrate. The polypeptide is Octanoyltransferase (Christiangramia forsetii (strain DSM 17595 / CGMCC 1.15422 / KT0803) (Gramella forsetii)).